The primary structure comprises 123 residues: Fluoride-specific ion channel FluC (123 aa).

4 helical membrane passes run 6-26 (VALV…LSGV), 38-58 (LLVN…IFWG), 68-88 (FLGT…YETF), and 100-120 (LLNI…GFVL). Residues Gly75 and Ser78 each contribute to the Na(+) site.

Belongs to the fluoride channel Fluc/FEX (TC 1.A.43) family.

It is found in the cell membrane. The enzyme catalyses fluoride(in) = fluoride(out). Na(+) is not transported, but it plays an essential structural role and its presence is essential for fluoride channel function. Its function is as follows. Fluoride-specific ion channel. Important for reducing fluoride concentration in the cell, thus reducing its toxicity. The chain is Fluoride-specific ion channel FluC from Pyrococcus furiosus (strain ATCC 43587 / DSM 3638 / JCM 8422 / Vc1).